The primary structure comprises 904 residues: Leucine--tRNA ligase (904 aa).

The 'HIGH' region motif lies at proline 49–histidine 59. The 'KMSKS' region motif lies at threonine 663–serine 667. An ATP-binding site is contributed by lysine 666.

This sequence belongs to the class-I aminoacyl-tRNA synthetase family.

The protein localises to the cytoplasm. It carries out the reaction tRNA(Leu) + L-leucine + ATP = L-leucyl-tRNA(Leu) + AMP + diphosphate. In Roseiflexus castenholzii (strain DSM 13941 / HLO8), this protein is Leucine--tRNA ligase.